An 80-amino-acid chain; its full sequence is Protein CEBPZOS (80 aa).

The helical transmembrane segment at 15-32 threads the bilayer; the sequence is GVLVAELVGVFGAYFLFS.

It localises to the mitochondrion membrane. This Homo sapiens (Human) protein is Protein CEBPZOS.